Consider the following 102-residue polypeptide: Small ribosomal subunit protein uS10 (102 aa).

This sequence belongs to the universal ribosomal protein uS10 family. Part of the 30S ribosomal subunit.

Its function is as follows. Involved in the binding of tRNA to the ribosomes. The sequence is that of Small ribosomal subunit protein uS10 from Gluconacetobacter diazotrophicus (strain ATCC 49037 / DSM 5601 / CCUG 37298 / CIP 103539 / LMG 7603 / PAl5).